Consider the following 378-residue polypeptide: MNQADRALQASQARVYNFSAGPAVLPTEVLEQAREEMLSWQGSGMSVMEMSHRGREFESIMAQAFADLRELLAVPDNYEILFLQGGAIAENAIVPLNLMRRLSLDAPKADYVVTGTWSVKSQQEARKYGEVNIAASSEAERFHRIPDVSAWKLSDDAAYVHLCTNETIVGVEYQETPDIGQAHGRVVVADVSSHILSRPVDWNGYAVLYGGAQKNIGPAGLTIVIARKDLLGHAHPLCPSAFNWRLVAENGSMYNTPPTYAIYVAGLVFQWIKRQGGVEALETRNIVKAKMLYDFIDASGFYRNDIHPSCRSRMNVPFFLNDESRNEAFLAQARAQGLVQLKGHKSVGGMRASIYNAMPLEGVEALVDFMREFERTAA.

Residue Arg-53 coordinates L-glutamate. Trp-117, Thr-167, Asp-190, and Gln-213 together coordinate pyridoxal 5'-phosphate. An N6-(pyridoxal phosphate)lysine modification is found at Lys-214. 255-256 contacts pyridoxal 5'-phosphate; sequence NT.

This sequence belongs to the class-V pyridoxal-phosphate-dependent aminotransferase family. SerC subfamily. Homodimer. It depends on pyridoxal 5'-phosphate as a cofactor.

It localises to the cytoplasm. It carries out the reaction O-phospho-L-serine + 2-oxoglutarate = 3-phosphooxypyruvate + L-glutamate. It catalyses the reaction 4-(phosphooxy)-L-threonine + 2-oxoglutarate = (R)-3-hydroxy-2-oxo-4-phosphooxybutanoate + L-glutamate. Its pathway is amino-acid biosynthesis; L-serine biosynthesis; L-serine from 3-phospho-D-glycerate: step 2/3. It functions in the pathway cofactor biosynthesis; pyridoxine 5'-phosphate biosynthesis; pyridoxine 5'-phosphate from D-erythrose 4-phosphate: step 3/5. In terms of biological role, catalyzes the reversible conversion of 3-phosphohydroxypyruvate to phosphoserine and of 3-hydroxy-2-oxo-4-phosphonooxybutanoate to phosphohydroxythreonine. This Ralstonia nicotianae (strain ATCC BAA-1114 / GMI1000) (Ralstonia solanacearum) protein is Phosphoserine aminotransferase.